A 1117-amino-acid polypeptide reads, in one-letter code: DNA polymerase (1117 aa).

The interval 591–621 (ESSPVASFEEDSEQTSDSSLGEVSSQGSSDG) is disordered. Positions 606–618 (SDSSLGEVSSQGS) are enriched in low complexity.

This sequence belongs to the DNA polymerase type-B family.

It is found in the host nucleus. It catalyses the reaction DNA(n) + a 2'-deoxyribonucleoside 5'-triphosphate = DNA(n+1) + diphosphate. The chain is DNA polymerase from Cavia porcellus (Guinea pig).